Consider the following 1051-residue polypeptide: Leucine zipper protein 1 (1051 aa).

Residue A2 is modified to N-acetylalanine. Residues 11–354 (ASNRHLRFKL…KLQVKKQKEL (344 aa)) are a coiled coil. Disordered regions lie at residues 247-293 (ISST…KDLN), 374-401 (RTKL…HKRE), 432-554 (AAKA…SQVT), and 569-601 (ASSQ…SKAP). The span at 254-293 (KESRRKGSLDYLKQVENETRDKSENEKNRNQEDNKVKDLN) shows a compositional bias: basic and acidic residues. S256, S261, S395, S513, S571, S575, S612, and S660 each carry phosphoserine. The span at 569–578 (ASSQRASSEG) shows a compositional bias: polar residues. Residues 675–727 (VNTTITPEPEPKLQPNSREKVKSRGGTRTPLFENDKNAAVENDSAKSMRSSSN) are disordered. T680 carries the phosphothreonine modification. The residue at position 691 (S691) is a Phosphoserine. A compositionally biased stretch (basic and acidic residues) spans 707-720 (ENDKNAAVENDSAK). Phosphoserine is present on S746. A compositionally biased stretch (low complexity) spans 789-799 (VTSKVTSSITI). Residues 789–837 (VTSKVTSSITIYPSDSSGPRAVPTEAPRERHTSTSNIQVGPPELTSVSN) form a disordered region. Residues 834-884 (SVSNHISSPLELSIHKHDITLQLTEAERVGDGSPKNRAETVVSRSSILIKP) form a required for interaction with FLNA region. S906 is modified (phosphoserine). Residues 929 to 938 (RDLKCSEDPP) show a composition bias toward basic and acidic residues. The tract at residues 929 to 1000 (RDLKCSEDPP…TQSSLTASEV (72 aa)) is disordered. Polar residues-rich tracts occupy residues 946–958 (EATN…SSTD) and 989–999 (RRTQSSLTASE). Phosphothreonine is present on T957. S993 bears the Phosphoserine mark.

Component of the CERF-1 ISWI chromatin remodeling complex (also called the CECR2-containing remodeling factor (CERF) complex) at least composed of CECR2 and SMARCA1. Component of the CERF-5 ISWI chromatin remodeling complex at least composed of CECR2 and SMARCA5/SNF2H. LUZP1 is detected as part of the CERF-1 and CERF-5 complexes in embryonic stem (ES) cells where it is involved in complex stabilization but is not detected in the complexes in the testis. Interacts (via C-terminus) with LIMA1/EPLIN; both proteins restrict ciliation and may work together to regulate this process. Interacts with myosin light chain MYL9; the interaction results in inhibition of phosphorylation of MYL9 by DAPK3. Interacts with DAPK3; the interaction is likely to occur throughout the cell cycle and reduces the LUZP1-mediated suppression of MYL9 phosphorylation. Interacts with the chromosomal passenger complex (CPC); CPC kinase activity is required for localization of LUZP1 to the centromere. As to expression, expressed in cerebral cortex, cerebellum, hippocampus and brain stem.

It is found in the cytoplasm. The protein localises to the cytoskeleton. The protein resides in the microtubule organizing center. Its subcellular location is the centrosome. It localises to the cilium basal body. It is found in the midbody. The protein localises to the chromosome. The protein resides in the centromere. Its subcellular location is the spindle. It localises to the stress fiber. It is found in the nucleus. The protein localises to the cell projection. The protein resides in the dendrite. Its subcellular location is the perikaryon. It localises to the cell junction. It is found in the tight junction. Its function is as follows. F-actin cross-linking protein. Stabilizes actin and acts as a negative regulator of primary cilium formation. Positively regulates the phosphorylation of both myosin II and protein phosphatase 1 regulatory subunit PPP1R12A/MYPT1 and promotes the assembly of myosin II stacks within actin stress fibers. Inhibits the phosphorylation of myosin light chain MYL9 by DAPK3 and suppresses the constriction velocity of the contractile ring during cytokinesis. Binds to microtubules and promotes epithelial cell apical constriction by up-regulating levels of diphosphorylated myosin light chain (MLC) through microtubule-dependent inhibition of MLC dephosphorylation by myosin phosphatase. Involved in regulation of cell migration, nuclear size and centriole number, probably through regulation of the actin cytoskeleton. Component of the CERF-1 and CERF-5 chromatin remodeling complexes in embryonic stem cells where it acts to stabilize the complexes. Plays a role in embryonic brain and cardiovascular development. The chain is Leucine zipper protein 1 (Luzp1) from Rattus norvegicus (Rat).